The chain runs to 281 residues: MTSKKERLDVLLVERGLAETREKAKRAIMAGIVYSNENRLDKPGEKIDRDLPLTVKGNPLRYVSRGGLKLEKALKEFPVSVKDKIMIDIGSSTGGFTDCALQNGAKQSYAVDVGYNQLAWKLRQDERVVVMERTNFRYATPADFTKGMPEFATIDVSFISLRLILPVLRTLLVPGSDCMALVKPQFEAGRESVGKKGIVRDPKVHADVLKRMISFSAAEGYICKGLSFSPITGGDGNIEFLLHLHWPGEGQEGQELPEEEIMRVVEEAHKTLKEKKADVPE.

The S4 RNA-binding domain occupies 6–67; it reads ERLDVLLVER…NPLRYVSRGG (62 aa).

Belongs to the TlyA family.

This chain is Putative rRNA methyltransferase YqxC (yqxC), found in Bacillus subtilis (strain 168).